Consider the following 137-residue polypeptide: Large ribosomal subunit protein uL16 (137 aa).

The protein belongs to the universal ribosomal protein uL16 family. In terms of assembly, part of the 50S ribosomal subunit.

Functionally, binds 23S rRNA and is also seen to make contacts with the A and possibly P site tRNAs. In Endomicrobium trichonymphae, this protein is Large ribosomal subunit protein uL16.